The chain runs to 76 residues: Putative membrane protein insertion efficiency factor (76 aa).

The protein belongs to the UPF0161 family.

It is found in the cell inner membrane. Functionally, could be involved in insertion of integral membrane proteins into the membrane. This Paraburkholderia phymatum (strain DSM 17167 / CIP 108236 / LMG 21445 / STM815) (Burkholderia phymatum) protein is Putative membrane protein insertion efficiency factor.